Here is a 412-residue protein sequence, read N- to C-terminus: Serine hydroxymethyltransferase (412 aa).

(6S)-5,6,7,8-tetrahydrofolate contacts are provided by residues Leu-117 and 121–123 (GHL). Lys-226 is subject to N6-(pyridoxal phosphate)lysine. A (6S)-5,6,7,8-tetrahydrofolate-binding site is contributed by 349–351 (SPF).

Belongs to the SHMT family. As to quaternary structure, homodimer. It depends on pyridoxal 5'-phosphate as a cofactor.

It localises to the cytoplasm. It catalyses the reaction (6R)-5,10-methylene-5,6,7,8-tetrahydrofolate + glycine + H2O = (6S)-5,6,7,8-tetrahydrofolate + L-serine. Its pathway is one-carbon metabolism; tetrahydrofolate interconversion. It participates in amino-acid biosynthesis; glycine biosynthesis; glycine from L-serine: step 1/1. Functionally, catalyzes the reversible interconversion of serine and glycine with tetrahydrofolate (THF) serving as the one-carbon carrier. This reaction serves as the major source of one-carbon groups required for the biosynthesis of purines, thymidylate, methionine, and other important biomolecules. Also exhibits THF-independent aldolase activity toward beta-hydroxyamino acids, producing glycine and aldehydes, via a retro-aldol mechanism. The sequence is that of Serine hydroxymethyltransferase from Geobacillus kaustophilus (strain HTA426).